We begin with the raw amino-acid sequence, 149 residues long: D-aminoacyl-tRNA deacylase (149 aa).

A Gly-cisPro motif, important for rejection of L-amino acids motif is present at residues G137 to P138.

The protein belongs to the DTD family. Homodimer.

The protein localises to the cytoplasm. The catalysed reaction is glycyl-tRNA(Ala) + H2O = tRNA(Ala) + glycine + H(+). It carries out the reaction a D-aminoacyl-tRNA + H2O = a tRNA + a D-alpha-amino acid + H(+). Its function is as follows. An aminoacyl-tRNA editing enzyme that deacylates mischarged D-aminoacyl-tRNAs. Also deacylates mischarged glycyl-tRNA(Ala), protecting cells against glycine mischarging by AlaRS. Acts via tRNA-based rather than protein-based catalysis; rejects L-amino acids rather than detecting D-amino acids in the active site. By recycling D-aminoacyl-tRNA to D-amino acids and free tRNA molecules, this enzyme counteracts the toxicity associated with the formation of D-aminoacyl-tRNA entities in vivo and helps enforce protein L-homochirality. The sequence is that of D-aminoacyl-tRNA deacylase from Fervidobacterium nodosum (strain ATCC 35602 / DSM 5306 / Rt17-B1).